Here is a 66-residue protein sequence, read N- to C-terminus: Gallinacin-5 (66 aa).

The first 19 residues, 1–19, serve as a signal peptide directing secretion; sequence MQILTLLFAVLLLMLRAEP. The propeptide occupies 20–25; that stretch reads GLSLAR. Cystine bridges form between cysteine 31–cysteine 59, cysteine 38–cysteine 53, and cysteine 43–cysteine 60.

This sequence belongs to the beta-defensin family. Strong expression in the tongue and bone marrow. Low expression in the esophagus, trachea, lung, brain and ovary. Expressed in the ovarian stroma, but not in the ovarian follicles.

The protein resides in the secreted. It is found in the cytoplasmic granule. Functionally, has bactericidal activity. The polypeptide is Gallinacin-5 (GAL5) (Gallus gallus (Chicken)).